A 348-amino-acid chain; its full sequence is MLKSRLRMFLNELKLLVLTGGGRPRAEPQPRGGGGGGCGWAPFAGCSARDGDGDEEEYYGSEPRARGLAGDKEPRAGPPPPPAPPPPPPGALDALSLSSSLDSGLRTPQCRICFQGPEQGELLSPCRCDGSVRCTHQPCLIRWISERGSWSCELCYFKYQVLAISTKNPLQWQAISLTVIEKVQIAAIVLGSLFLVASISWLIWSSLSPSAKWQRQDLLFQICYGMYGFMDVVCIGLIVHEGSSVYRIFKRWQAVNQQWKVLNYDKTKDVGGDTGGGAAGKPGPRTSRTSPPAGAPTRPPAAQRMRMRTLLPQRCGYTILHLLGQLRPPDARSSSHSGREVVMRVTTV.

Residues 48–96 (ARDGDGDEEEYYGSEPRARGLAGDKEPRAGPPPPPAPPPPPPGALDALS) are disordered. Residues 63 to 75 (PRARGLAGDKEPR) show a composition bias toward basic and acidic residues. Positions 76–90 (AGPPPPPAPPPPPPG) are enriched in pro residues. The RING-CH-type zinc finger occupies 102-162 (DSGLRTPQCR…ELCYFKYQVL (61 aa)). 8 residues coordinate Zn(2+): Cys-110, Cys-113, Cys-126, Cys-128, His-136, Cys-139, Cys-152, and Cys-155. Transmembrane regions (helical) follow at residues 185 to 205 (IAAI…LIWS) and 219 to 239 (LFQI…GLIV). Disordered regions lie at residues 272–304 (GDTG…AAQR) and 328–348 (PPDA…VTTV).

As to quaternary structure, homodimer.

It localises to the golgi apparatus membrane. Its subcellular location is the lysosome membrane. The catalysed reaction is S-ubiquitinyl-[E2 ubiquitin-conjugating enzyme]-L-cysteine + [acceptor protein]-L-lysine = [E2 ubiquitin-conjugating enzyme]-L-cysteine + N(6)-ubiquitinyl-[acceptor protein]-L-lysine.. It functions in the pathway protein modification; protein ubiquitination. Its function is as follows. E3 ubiquitin-protein ligase that may mediate ubiquitination of MHC-I, CD4 and ICAM1, and promote their subsequent endocytosis and sorting to lysosomes via multivesicular bodies. E3 ubiquitin ligases accept ubiquitin from an E2 ubiquitin-conjugating enzyme in the form of a thioester and then directly transfer the ubiquitin to targeted substrates. The sequence is that of E3 ubiquitin-protein ligase MARCHF9 (Marchf9) from Mus musculus (Mouse).